The sequence spans 88 residues: MNPELQSAIGQGAALKHAETVDKSAPQIENVTVKKVDRSSFLEEVAKPHELKHAETVDKSGPAIPEDVHVKKVDRGAFLSEIEKAAKQ.

Met1 carries the post-translational modification N-acetylmethionine. The tract at residues 1–22 (MNPELQSAIGQGAALKHAETVD) is disordered. At Lys35 the chain carries N6,N6,N6-trimethyllysine. Residues 37–54 (DRSSFLEEVAKPHELKHA) enclose the WH2 domain. Residue Lys72 is modified to N6,N6,N6-trimethyllysine.

Monomer.

Is able to bind two actin monomers at high concentrations of G-actin. This is Actobindin from Acanthamoeba castellanii (Amoeba).